Here is a 760-residue protein sequence, read N- to C-terminus: Xaa-Pro dipeptidyl-peptidase (760 aa).

Residues S349, D469, and H499 each act as charge relay system in the active site.

It belongs to the peptidase S15 family. As to quaternary structure, homodimer.

Its subcellular location is the cytoplasm. The enzyme catalyses Hydrolyzes Xaa-Pro-|- bonds to release unblocked, N-terminal dipeptides from substrates including Ala-Pro-|-p-nitroanilide and (sequentially) Tyr-Pro-|-Phe-Pro-|-Gly-Pro-|-Ile.. In terms of biological role, removes N-terminal dipeptides sequentially from polypeptides having unsubstituted N-termini provided that the penultimate residue is proline. The polypeptide is Xaa-Pro dipeptidyl-peptidase (Streptococcus pyogenes serotype M28 (strain MGAS6180)).